Consider the following 131-residue polypeptide: Profilin-1 (131 aa).

It belongs to the profilin family. Occurs in many kinds of cells as a complex with monomeric actin in a 1:1 ratio.

The protein resides in the cytoplasm. It is found in the cytoskeleton. Functionally, binds to actin and affects the structure of the cytoskeleton. At high concentrations, profilin prevents the polymerization of actin, whereas it enhances it at low concentrations. By binding to PIP2, it inhibits the formation of IP3 and DG. This Malus domestica (Apple) protein is Profilin-1.